A 248-amino-acid chain; its full sequence is 4-hydroxy-tetrahydrodipicolinate reductase (248 aa).

NAD(+)-binding positions include 9–14, 77–79, and 104–107; these read GARGKV, GTT, and APNF. Catalysis depends on His-134, which acts as the Proton donor/acceptor. Position 135 (His-135) interacts with (S)-2,3,4,5-tetrahydrodipicolinate. The active-site Proton donor is the Lys-138. Residue 144–145 coordinates (S)-2,3,4,5-tetrahydrodipicolinate; it reads GT.

Belongs to the DapB family.

It localises to the cytoplasm. The enzyme catalyses (S)-2,3,4,5-tetrahydrodipicolinate + NAD(+) + H2O = (2S,4S)-4-hydroxy-2,3,4,5-tetrahydrodipicolinate + NADH + H(+). It carries out the reaction (S)-2,3,4,5-tetrahydrodipicolinate + NADP(+) + H2O = (2S,4S)-4-hydroxy-2,3,4,5-tetrahydrodipicolinate + NADPH + H(+). Its pathway is amino-acid biosynthesis; L-lysine biosynthesis via DAP pathway; (S)-tetrahydrodipicolinate from L-aspartate: step 4/4. In terms of biological role, catalyzes the conversion of 4-hydroxy-tetrahydrodipicolinate (HTPA) to tetrahydrodipicolinate. This is 4-hydroxy-tetrahydrodipicolinate reductase from Nocardia farcinica (strain IFM 10152).